Reading from the N-terminus, the 451-residue chain is F-box/kelch-repeat protein At1g74510 (451 aa).

The 47-residue stretch at 93 to 139 (SSPVTRLDQNALLNCLAHCSLSDFGSIASTNRTFRSLIKDSELYRLR) folds into the F-box domain. Kelch repeat units lie at residues 137-188 (RLRR…KESL), 193-236 (ELLV…SLGE), 237-284 (IAVI…FMDG), 286-333 (FYCI…DQAK), and 349-395 (AVVK…GMAF).

The polypeptide is F-box/kelch-repeat protein At1g74510 (Arabidopsis thaliana (Mouse-ear cress)).